A 233-amino-acid polypeptide reads, in one-letter code: Ribose-5-phosphate isomerase A (233 aa).

Residues 31-34 (SGST), 87-90 (DGAD), and 100-103 (KGGG) contribute to the substrate site. Residue E109 is the Proton acceptor of the active site. Position 127 (K127) interacts with substrate.

This sequence belongs to the ribose 5-phosphate isomerase family. In terms of assembly, homodimer.

The enzyme catalyses aldehydo-D-ribose 5-phosphate = D-ribulose 5-phosphate. It participates in carbohydrate degradation; pentose phosphate pathway; D-ribose 5-phosphate from D-ribulose 5-phosphate (non-oxidative stage): step 1/1. Functionally, catalyzes the reversible conversion of ribose-5-phosphate to ribulose 5-phosphate. The protein is Ribose-5-phosphate isomerase A of Chlamydia caviae (strain ATCC VR-813 / DSM 19441 / 03DC25 / GPIC) (Chlamydophila caviae).